Reading from the N-terminus, the 295-residue chain is NADPH-dependent reductive aminase (295 aa).

An N-terminal signal peptide occupies residues Met1–Ala18. Gly6–Lys20 lines the NADP(+) pocket.

Belongs to the HIBADH-related family. Homodimer. NADPH is required as a cofactor.

Functionally, NADPH-dependent reductive aminase that catalyzes the reductive coupling of a broad set of carbonyl compounds with a variety of primary and secondary amines. Possesses remarkably high activity for the reductive amination of ketones and amines, often with high stereoselectivity and in some cases with ketone:amine ratios as low as 1:1. The cofactor NADPH, the carbonyl compound and the amine are added to the enzyme in that sequence, followed by the release of product, NADP(+) being released at last. RedAm is also able to act in the reverse, oxidative direction and exhibits activity in the dehydrogenation of amines to yield imines. The highest activity is found for 1-methyl-tetrahydroquinoline and acyclic amines are also found to be transformed. The protein is NADPH-dependent reductive aminase of Aspergillus oryzae (strain ATCC 42149 / RIB 40) (Yellow koji mold).